The following is a 308-amino-acid chain: tRNA dimethylallyltransferase (308 aa).

19–26 contributes to the ATP binding site; the sequence is GPTASGKS. 21 to 26 provides a ligand contact to substrate; sequence TASGKS. Residues 44–47 are interaction with substrate tRNA; that stretch reads DSMQ.

It belongs to the IPP transferase family. As to quaternary structure, monomer. Requires Mg(2+) as cofactor.

The catalysed reaction is adenosine(37) in tRNA + dimethylallyl diphosphate = N(6)-dimethylallyladenosine(37) in tRNA + diphosphate. Its function is as follows. Catalyzes the transfer of a dimethylallyl group onto the adenine at position 37 in tRNAs that read codons beginning with uridine, leading to the formation of N6-(dimethylallyl)adenosine (i(6)A). The sequence is that of tRNA dimethylallyltransferase from Methylobacterium radiotolerans (strain ATCC 27329 / DSM 1819 / JCM 2831 / NBRC 15690 / NCIMB 10815 / 0-1).